Consider the following 206-residue polypeptide: Small ribosomal subunit protein uS4 (206 aa).

The S4 RNA-binding domain maps to 98-155; sequence TRLDNVVYRLGWALSRAQARQIVSHGKIAVNGKRVNIPSYNLKPGDVVELLDKDLIPV.

Belongs to the universal ribosomal protein uS4 family. In terms of assembly, part of the 30S ribosomal subunit. Contacts protein S5. The interaction surface between S4 and S5 is involved in control of translational fidelity.

Functionally, one of the primary rRNA binding proteins, it binds directly to 16S rRNA where it nucleates assembly of the body of the 30S subunit. In terms of biological role, with S5 and S12 plays an important role in translational accuracy. This is Small ribosomal subunit protein uS4 from Dictyoglomus turgidum (strain DSM 6724 / Z-1310).